A 434-amino-acid chain; its full sequence is Trigger factor 2 (434 aa).

Positions 164 to 247 (GDTVTVDYDC…VKKVERIEIL (84 aa)) constitute a PPIase FKBP-type domain.

It belongs to the FKBP-type PPIase family. Tig subfamily.

It is found in the cytoplasm. It carries out the reaction [protein]-peptidylproline (omega=180) = [protein]-peptidylproline (omega=0). Its function is as follows. Involved in protein export. Acts as a chaperone by maintaining the newly synthesized protein in an open conformation. Functions as a peptidyl-prolyl cis-trans isomerase. This is Trigger factor 2 from Desulfitobacterium hafniense (strain Y51).